Reading from the N-terminus, the 290-residue chain is MALRQCAIYGKGGIGKSTTTQNLVAALAEAGKKVMIVGCDPKADSTRLILHSKAQNTVMEMAASAGSGEDLELEDVLQIGYGGVKCVESGGPEPGVGCAGRGVITAINFLEEEGAYSDDLDFVFYDVLGDVVCGGFAMPIRENKAQEIYIVCSGEMMAMYAANNIAKGIVKYAHSGSVRLGGLICNSRKTDREDELIMALAAKIGTQMIHFVPRDNVVQHAEIRRMTVIEYDPKAKQADEYRALAQKILNNKLLVIPNPASMEDLEELLMEFGIMEAEDESIVGKAGAEG.

10-17 (GKGGIGKS) is an ATP binding site. A [4Fe-4S] cluster-binding site is contributed by cysteine 98. The residue at position 101 (arginine 101) is an ADP-ribosylarginine; by dinitrogenase reductase ADP-ribosyltransferase. Cysteine 133 serves as a coordination point for [4Fe-4S] cluster.

This sequence belongs to the NifH/BchL/ChlL family. In terms of assembly, homodimer. [4Fe-4S] cluster is required as a cofactor. The reversible ADP-ribosylation of Arg-101 inactivates the nitrogenase reductase and regulates nitrogenase activity.

The enzyme catalyses N2 + 8 reduced [2Fe-2S]-[ferredoxin] + 16 ATP + 16 H2O = H2 + 8 oxidized [2Fe-2S]-[ferredoxin] + 2 NH4(+) + 16 ADP + 16 phosphate + 6 H(+). The key enzymatic reactions in nitrogen fixation are catalyzed by the nitrogenase complex, which has 2 components: the iron protein (component 2) and a component 1 which is either a molybdenum-iron protein, a vanadium-iron, or an iron-iron protein. This chain is Nitrogenase iron protein 2 (vnfH), found in Azotobacter chroococcum mcd 1.